The following is a 228-amino-acid chain: Death domain-containing membrane protein NRADD (228 aa).

Over 1–52 (MLHNVSKGVVYSDTALKGQDGDREGMWVGAGGALAPNTSSLFPPEPPGASSN) the chain is Extracellular. N-linked (GlcNAc...) asparagine glycosylation is found at N4 and N37. The chain crosses the membrane as a helical; Signal-anchor for type III membrane protein span at residues 53-73 (IIPVYCALLATVVLGLLAYVA). The Cytoplasmic segment spans residues 74-228 (FKCWRSRKQR…SSPAEGCSVV (155 aa)). The region spanning 143 to 222 (EEVQRLLILG…DVVQVLSSPA (80 aa)) is the Death domain.

As to quaternary structure, interacts with NTRK1. Isoform 1 and isoform 2 interact with NGFR. Interacts with SORT1. Isoform 1 is N-glycosylated. Isoform 2 is not N-glycosylated. Detected in embryo, including embryonic brain. Detected at very low levels in adult testis, spleen, thymus and lung.

It is found in the cell membrane. Its subcellular location is the nucleus. Modulates NTRK1 signaling. Can activate several intracellular signaling pathways, leading to activation of JUN. Promotes translocation of SORT1 to the cell membrane, and thereby hinders lysosomal degradation of SOTR1 and promotes its interaction with NGFR. Both isoform 1 and isoform 2 promote apoptosis. The polypeptide is Death domain-containing membrane protein NRADD (Nradd) (Rattus norvegicus (Rat)).